Here is a 68-residue protein sequence, read N- to C-terminus: Frenatin-3 (68 aa).

An N-terminal signal peptide occupies residues 1-22; sequence MHFLKKSIFLVLFLGLVSLSIC. Positions 23–46 are excised as a propeptide; that stretch reads EKEKREDQNEEEVDENEEESEEKR. Residues 26-47 form a disordered region; sequence KREDQNEEEVDENEEESEEKRG. A compositionally biased stretch (acidic residues) spans 30–42; it reads QNEEEVDENEEES.

The protein belongs to the frog skin active peptide (FSAP) family. Frenatin subfamily. Expressed by the granular skin glands.

Its subcellular location is the secreted. In terms of biological role, antimicrobial peptide with activity against both Gram-positive and Gram-negative bacteria. Antibacterial activities have been tested against Bacillus cereus (MIC=12.5 ug/ml), Escherichia coli (MIC=50 ug/ml), Leuconostoc mesenteroides (MIC=25 ug/ml), Micrococcus luteus (MIC=1.5 ug/ml), Pastewella haemolytica (MIC=0.8 ug/ml), Staphylococcus aureus (MIC&lt;l00 ug/ml), Streptococcus faecalis (MIC&lt;150 ug/ml) and Streptococcus uberis (MIC=50 ug/ml). Strongly inhibits the formation of NO by neuronal nitric oxide synthase (nNOS) at micromolar concentrations. Acts by a non-competitive mechanism, probably by binding to calcium/calmodulin and as a consequence blocking calmodulin attachment to nNOS. The protein is Frenatin-3 of Nyctimystes infrafrenatus (White-lipped tree frog).